The primary structure comprises 139 residues: Acidic phospholipase A2 Ts-A4 (139 aa).

Residues 1–16 form the signal peptide; that stretch reads MRTLWILAVLLVGVEG. 7 cysteine pairs are disulfide-bonded: C42–C132, C44–C60, C59–C111, C65–C139, C66–C104, C73–C97, and C91–C102. 3 residues coordinate Ca(2+): Y43, G45, and G47. H63 is a catalytic residue. D64 is a Ca(2+) binding site. Residue D105 is part of the active site.

Ca(2+) serves as cofactor. As to expression, expressed by the venom gland.

It localises to the secreted. The catalysed reaction is a 1,2-diacyl-sn-glycero-3-phosphocholine + H2O = a 1-acyl-sn-glycero-3-phosphocholine + a fatty acid + H(+). PLA2 catalyzes the calcium-dependent hydrolysis of the 2-acyl groups in 3-sn-phosphoglycerides. The polypeptide is Acidic phospholipase A2 Ts-A4 (Trimeresurus stejnegeri (Chinese green tree viper)).